The following is a 182-amino-acid chain: Cell wall protein phiA (182 aa).

Residues 1–18 form the signal peptide; the sequence is MKLTSTAALASLAVAATA. 2 N-linked (GlcNAc...) asparagine glycosylation sites follow: N57 and N107.

This sequence belongs to the phiA family. As to expression, mainly present in phialides and conidia.

The protein localises to the secreted. The protein resides in the cell wall. Cell wall protein involved in development of asexual structures such as phialide and conidium development, and thus required for spore formation. Plays a role as a general stress protectant produced by the fungus in competition with antagonistic bacteria. In Emericella nidulans (strain FGSC A4 / ATCC 38163 / CBS 112.46 / NRRL 194 / M139) (Aspergillus nidulans), this protein is Cell wall protein phiA.